The following is a 106-amino-acid chain: ATP-dependent Clp protease adapter protein ClpS (106 aa).

This sequence belongs to the ClpS family. As to quaternary structure, binds to the N-terminal domain of the chaperone ClpA.

Involved in the modulation of the specificity of the ClpAP-mediated ATP-dependent protein degradation. The protein is ATP-dependent Clp protease adapter protein ClpS of Escherichia coli O139:H28 (strain E24377A / ETEC).